We begin with the raw amino-acid sequence, 100 residues long: Nucleoid-associated protein HPG27_32 (100 aa).

This sequence belongs to the YbaB/EbfC family. In terms of assembly, homodimer.

It localises to the cytoplasm. Its subcellular location is the nucleoid. Binds to DNA and alters its conformation. May be involved in regulation of gene expression, nucleoid organization and DNA protection. The chain is Nucleoid-associated protein HPG27_32 from Helicobacter pylori (strain G27).